Consider the following 743-residue polypeptide: 1,4-alpha-glucan branching enzyme GlgB 2 (743 aa).

Residues 1 to 23 (MSERQGGQEQRTEADGMTTEGIS) form a disordered region. Asp-422 serves as the catalytic Nucleophile. Catalysis depends on Glu-475, which acts as the Proton donor.

It belongs to the glycosyl hydrolase 13 family. GlgB subfamily. In terms of assembly, monomer.

It catalyses the reaction Transfers a segment of a (1-&gt;4)-alpha-D-glucan chain to a primary hydroxy group in a similar glucan chain.. It participates in glycan biosynthesis; glycogen biosynthesis. Functionally, catalyzes the formation of the alpha-1,6-glucosidic linkages in glycogen by scission of a 1,4-alpha-linked oligosaccharide from growing alpha-1,4-glucan chains and the subsequent attachment of the oligosaccharide to the alpha-1,6 position. In Xanthomonas euvesicatoria pv. vesicatoria (strain 85-10) (Xanthomonas campestris pv. vesicatoria), this protein is 1,4-alpha-glucan branching enzyme GlgB 2.